The following is a 561-amino-acid chain: Potassium-transporting ATPase potassium-binding subunit (561 aa).

12 helical membrane-spanning segments follow: residues 5 to 25 (LAAG…YVPV), 60 to 80 (YGYA…LYAL), 86 to 106 (VLPL…NTAV), 131 to 151 (GLAV…VALI), 177 to 197 (ILLP…VIQS), 247 to 267 (PTPV…VSLT), 281 to 301 (LTLL…TLAA), 324 to 344 (FGIP…TGAV), 376 to 396 (GLYG…LLVG), 415 to 435 (ALSV…TVIL), 488 to 508 (ALGL…LALA), and 537 to 557 (GTVV…GPIA).

It belongs to the KdpA family. As to quaternary structure, the system is composed of three essential subunits: KdpA, KdpB and KdpC.

It localises to the cell membrane. Functionally, part of the high-affinity ATP-driven potassium transport (or Kdp) system, which catalyzes the hydrolysis of ATP coupled with the electrogenic transport of potassium into the cytoplasm. This subunit binds the extracellular potassium ions and delivers the ions to the membrane domain of KdpB through an intramembrane tunnel. In Rhodococcus opacus (strain B4), this protein is Potassium-transporting ATPase potassium-binding subunit.